Reading from the N-terminus, the 432-residue chain is uncharacterized protein (432 aa).

Disordered regions lie at residues 37 to 61, 127 to 151, and 298 to 378; these read DGIGGAVGRDGDSLDNDGDSSSADC, RDHDVDSGGRDSNSKVKRKSDDTRY, and SVSS…NHQC. Polar residues predominate over residues 312–335; that stretch reads DSSTLANTQGFREDQSQQQHTPSP. Residues 341-366 show a composition bias toward low complexity; sequence SSLSHQFHQSIHQSHQHHQSIYQSQH.

This is an uncharacterized protein from Arabidopsis thaliana (Mouse-ear cress).